The sequence spans 351 residues: MYSLARPFLFSLDAERAHGLGLSALDLAYRTGTTPLLAARIAPMPSTVFGLTFPNPVGLAAGLDKNGEHIDALFALGFGFVEIGTITPRPQAGNPQPRLFRLPEHNAIINRMGFNNAGVDALVRNVERARNRRGLLGINIGKNKDTPNEQAVDDYIACLDKVYPLADYITVNISSPNTAGLRELQEETALRQLVSQLRDRQEDLAARHGRRVPMLVKVAPDLSDRDIDAAARVLGELQVDGVIATNTTIDHSKVAGDPLANEAGGLSGAPVLEQSTLVLRRLRSRLPESVPLVGVGGILSGADAVAKMAAGAALVQCYSGLIFRGPALVSECVEAIRRRREAPSRGAVAPL.

FMN is bound by residues 61-65 (AGLDK) and Thr85. Substrate is bound at residue Lys65. Position 110 to 114 (110 to 114 (NRMGF)) interacts with substrate. FMN-binding residues include Asn139 and Asn172. Asn172 provides a ligand contact to substrate. The active-site Nucleophile is Ser175. Asn177 provides a ligand contact to substrate. FMN-binding residues include Lys217 and Thr245. Substrate is bound at residue 246-247 (NT). Residues Gly268, Gly297, and 318–319 (YS) each bind FMN.

This sequence belongs to the dihydroorotate dehydrogenase family. Type 2 subfamily. Monomer. It depends on FMN as a cofactor.

The protein localises to the cell membrane. It catalyses the reaction (S)-dihydroorotate + a quinone = orotate + a quinol. Its pathway is pyrimidine metabolism; UMP biosynthesis via de novo pathway; orotate from (S)-dihydroorotate (quinone route): step 1/1. Its function is as follows. Catalyzes the conversion of dihydroorotate to orotate with quinone as electron acceptor. This Stenotrophomonas maltophilia (strain K279a) protein is Dihydroorotate dehydrogenase (quinone).